Consider the following 656-residue polypeptide: UvrABC system protein C (656 aa).

A GIY-YIG domain is found at 41-120; the sequence is KSSGCYLFKD…IKTNKPYFNI (80 aa). Positions 230-265 constitute a UVR domain; sequence DDLEVFLERKMNQYSNDLEFENAAKIRDQISGLKLL.

This sequence belongs to the UvrC family. In terms of assembly, interacts with UvrB in an incision complex.

The protein localises to the cytoplasm. In terms of biological role, the UvrABC repair system catalyzes the recognition and processing of DNA lesions. UvrC both incises the 5' and 3' sides of the lesion. The N-terminal half is responsible for the 3' incision and the C-terminal half is responsible for the 5' incision. This is UvrABC system protein C from Prochlorococcus marinus subsp. pastoris (strain CCMP1986 / NIES-2087 / MED4).